The chain runs to 156 residues: ATP synthase subunit b (156 aa).

Residues 7–27 (FFAQMVVFFILWWVVAKFIWP) traverse the membrane as a helical segment.

This sequence belongs to the ATPase B chain family. F-type ATPases have 2 components, F(1) - the catalytic core - and F(0) - the membrane proton channel. F(1) has five subunits: alpha(3), beta(3), gamma(1), delta(1), epsilon(1). F(0) has three main subunits: a(1), b(2) and c(10-14). The alpha and beta chains form an alternating ring which encloses part of the gamma chain. F(1) is attached to F(0) by a central stalk formed by the gamma and epsilon chains, while a peripheral stalk is formed by the delta and b chains.

It is found in the cell inner membrane. Functionally, f(1)F(0) ATP synthase produces ATP from ADP in the presence of a proton or sodium gradient. F-type ATPases consist of two structural domains, F(1) containing the extramembraneous catalytic core and F(0) containing the membrane proton channel, linked together by a central stalk and a peripheral stalk. During catalysis, ATP synthesis in the catalytic domain of F(1) is coupled via a rotary mechanism of the central stalk subunits to proton translocation. In terms of biological role, component of the F(0) channel, it forms part of the peripheral stalk, linking F(1) to F(0). The polypeptide is ATP synthase subunit b (Cupriavidus necator (strain ATCC 17699 / DSM 428 / KCTC 22496 / NCIMB 10442 / H16 / Stanier 337) (Ralstonia eutropha)).